Here is a 90-residue protein sequence, read N- to C-terminus: RNA-binding protein Hfq (90 aa).

The Sm domain occupies 9–68; that stretch reads DPFLNALRRERVPVSIYLVNGIKLQGQVESFDQFVILLKNTVSQMVYKHAISTVVPARPF. Residues 71–90 are disordered; it reads TGHQNAQGGYGPQDDVPSGE.

It belongs to the Hfq family. As to quaternary structure, homohexamer.

RNA chaperone that binds small regulatory RNA (sRNAs) and mRNAs to facilitate mRNA translational regulation in response to envelope stress, environmental stress and changes in metabolite concentrations. Also binds with high specificity to tRNAs. This is RNA-binding protein Hfq from Shewanella putrefaciens (strain CN-32 / ATCC BAA-453).